Here is a 328-residue protein sequence, read N- to C-terminus: MIDFTNFYSSIAKNRLSHWLRTLPMQLHEWENTHVHGQLASWIRVLNKFPDIKTSHIELKDRVEIGSATELSPGETKKLENLLQKFHPWRKGPFVIHGIHIDTEWRSDWKWDRLLPHISPLKYRYVLDVGCGSGYHMWRMRGEGAEFVVGIDPSELFLCQFEAVRHFANKEQNVHLLPLGIQELPKLGAFDTVFSMGVLYHRKSPMDHITQLQDQLVEGGELVLETLVIGGDENAVLVPQDRYAKMRNIWFLPSAQALKLWVEKCGFENVRIADINDTLTGEQRSTAWMTNESLEDYLDPNDPSRTVEGYPAPKRALLIAKKAIKALS.

Carboxy-S-adenosyl-L-methionine-binding positions include K91, W105, K110, G130, 152 to 154 (DPS), M196, Y200, and R315.

It belongs to the class I-like SAM-binding methyltransferase superfamily. CmoB family. Homotetramer.

The catalysed reaction is carboxy-S-adenosyl-L-methionine + 5-hydroxyuridine(34) in tRNA = 5-carboxymethoxyuridine(34) in tRNA + S-adenosyl-L-homocysteine + H(+). Catalyzes carboxymethyl transfer from carboxy-S-adenosyl-L-methionine (Cx-SAM) to 5-hydroxyuridine (ho5U) to form 5-carboxymethoxyuridine (cmo5U) at position 34 in tRNAs. The protein is tRNA U34 carboxymethyltransferase of Psychromonas ingrahamii (strain DSM 17664 / CCUG 51855 / 37).